A 339-amino-acid chain; its full sequence is tRNA N6-adenosine threonylcarbamoyltransferase (339 aa).

Fe cation contacts are provided by His-111 and His-115. Residues 134–138 (LVSGG), Asp-167, Gly-180, and Asn-272 each bind substrate. Asp-300 contacts Fe cation.

Belongs to the KAE1 / TsaD family. Requires Fe(2+) as cofactor.

It localises to the cytoplasm. The enzyme catalyses L-threonylcarbamoyladenylate + adenosine(37) in tRNA = N(6)-L-threonylcarbamoyladenosine(37) in tRNA + AMP + H(+). Required for the formation of a threonylcarbamoyl group on adenosine at position 37 (t(6)A37) in tRNAs that read codons beginning with adenine. Is involved in the transfer of the threonylcarbamoyl moiety of threonylcarbamoyl-AMP (TC-AMP) to the N6 group of A37, together with TsaE and TsaB. TsaD likely plays a direct catalytic role in this reaction. This chain is tRNA N6-adenosine threonylcarbamoyltransferase, found in Vibrio vulnificus (strain YJ016).